A 760-amino-acid chain; its full sequence is Catalase-peroxidase (760 aa).

The tract at residues 1–57 is disordered; that stretch reads MTDSQDNRTPESPQGVDRKAEGGCPVLHDGVTAQGSESENPAIDSPTPRTGGRPNSL. Residues 129–251 constitute a cross-link (tryptophyl-tyrosyl-methioninium (Trp-Tyr) (with M-277)); that stretch reads WHAAGTYRIH…LGAVQMGLIY (123 aa). H130 serves as the catalytic Proton acceptor. The tryptophyl-tyrosyl-methioninium (Tyr-Met) (with W-129) cross-link spans 251 to 277; it reads YVNPEGPNGNPDPLASARDIRETFARM. Residue H292 participates in heme b binding.

It belongs to the peroxidase family. Peroxidase/catalase subfamily. In terms of assembly, homodimer or homotetramer. Heme b is required as a cofactor. In terms of processing, formation of the three residue Trp-Tyr-Met cross-link is important for the catalase, but not the peroxidase activity of the enzyme.

The enzyme catalyses H2O2 + AH2 = A + 2 H2O. It catalyses the reaction 2 H2O2 = O2 + 2 H2O. Functionally, bifunctional enzyme with both catalase and broad-spectrum peroxidase activity. In Nocardioides sp. (strain ATCC BAA-499 / JS614), this protein is Catalase-peroxidase.